Here is a 497-residue protein sequence, read N- to C-terminus: tRNA-2-methylthio-N(6)-dimethylallyladenosine synthase (497 aa).

Basic and acidic residues predominate over residues 1–10 (MTLLDSDSRQ). The interval 1–26 (MTLLDSDSRQSAEVLPAAGPAPDRPR) is disordered. In terms of domain architecture, MTTase N-terminal spans 26-142 (RTYQVRTFGC…LPVLLERARI (117 aa)). Residues Cys-35, Cys-71, Cys-105, Cys-179, Cys-183, and Cys-186 each coordinate [4Fe-4S] cluster. The Radical SAM core domain occupies 165–395 (RESVYAAWVA…VALVEQIALE (231 aa)). The 67-residue stretch at 398-464 (QAQVGRVVEV…PHCLIADQVL (67 aa)) folds into the TRAM domain.

It belongs to the methylthiotransferase family. MiaB subfamily. As to quaternary structure, monomer. [4Fe-4S] cluster is required as a cofactor.

Its subcellular location is the cytoplasm. It catalyses the reaction N(6)-dimethylallyladenosine(37) in tRNA + (sulfur carrier)-SH + AH2 + 2 S-adenosyl-L-methionine = 2-methylsulfanyl-N(6)-dimethylallyladenosine(37) in tRNA + (sulfur carrier)-H + 5'-deoxyadenosine + L-methionine + A + S-adenosyl-L-homocysteine + 2 H(+). Catalyzes the methylthiolation of N6-(dimethylallyl)adenosine (i(6)A), leading to the formation of 2-methylthio-N6-(dimethylallyl)adenosine (ms(2)i(6)A) at position 37 in tRNAs that read codons beginning with uridine. The protein is tRNA-2-methylthio-N(6)-dimethylallyladenosine synthase of Acidothermus cellulolyticus (strain ATCC 43068 / DSM 8971 / 11B).